Consider the following 333-residue polypeptide: DNA-directed RNA polymerase subunit alpha (333 aa).

Residues 1–233 (MVREKIRVST…DLFIPFLHAE (233 aa)) are alpha N-terminal domain (alpha-NTD). The tract at residues 269–333 (IALKYIFIDQ…DILEMEKNFA (65 aa)) is alpha C-terminal domain (alpha-CTD).

Belongs to the RNA polymerase alpha chain family. In terms of assembly, in plastids the minimal PEP RNA polymerase catalytic core is composed of four subunits: alpha, beta, beta', and beta''. When a (nuclear-encoded) sigma factor is associated with the core the holoenzyme is formed, which can initiate transcription.

It is found in the plastid. It localises to the chloroplast. It catalyses the reaction RNA(n) + a ribonucleoside 5'-triphosphate = RNA(n+1) + diphosphate. In terms of biological role, DNA-dependent RNA polymerase catalyzes the transcription of DNA into RNA using the four ribonucleoside triphosphates as substrates. The chain is DNA-directed RNA polymerase subunit alpha from Cucumis sativus (Cucumber).